A 452-amino-acid polypeptide reads, in one-letter code: Bifunctional protein GlmU (452 aa).

Positions 1-224 (MNIVILAAGQ…EWEVLGVNSK (224 aa)) are pyrophosphorylase. Residues 6–9 (LAAG), Lys20, Gln71, 76–77 (GT), 98–100 (YGD), Gly134, Glu149, Asn164, and Asn222 each bind UDP-N-acetyl-alpha-D-glucosamine. Position 100 (Asp100) interacts with Mg(2+). Asn222 contributes to the Mg(2+) binding site. The interval 225–245 (VQLAELERQHQLNLAGELLVA) is linker. The interval 246–452 (GVRLADPARI…GWERPKKVKK (207 aa)) is N-acetyltransferase. UDP-N-acetyl-alpha-D-glucosamine contacts are provided by Arg328 and Lys346. Residue His358 is the Proton acceptor of the active site. UDP-N-acetyl-alpha-D-glucosamine contacts are provided by Tyr361 and Asn372. Residues Ala375, 381 to 382 (NY), Ser400, Ala418, and Arg435 each bind acetyl-CoA.

It in the N-terminal section; belongs to the N-acetylglucosamine-1-phosphate uridyltransferase family. The protein in the C-terminal section; belongs to the transferase hexapeptide repeat family. As to quaternary structure, homotrimer. Mg(2+) serves as cofactor.

It is found in the cytoplasm. It carries out the reaction alpha-D-glucosamine 1-phosphate + acetyl-CoA = N-acetyl-alpha-D-glucosamine 1-phosphate + CoA + H(+). The enzyme catalyses N-acetyl-alpha-D-glucosamine 1-phosphate + UTP + H(+) = UDP-N-acetyl-alpha-D-glucosamine + diphosphate. The protein operates within nucleotide-sugar biosynthesis; UDP-N-acetyl-alpha-D-glucosamine biosynthesis; N-acetyl-alpha-D-glucosamine 1-phosphate from alpha-D-glucosamine 6-phosphate (route II): step 2/2. It functions in the pathway nucleotide-sugar biosynthesis; UDP-N-acetyl-alpha-D-glucosamine biosynthesis; UDP-N-acetyl-alpha-D-glucosamine from N-acetyl-alpha-D-glucosamine 1-phosphate: step 1/1. It participates in bacterial outer membrane biogenesis; LPS lipid A biosynthesis. Functionally, catalyzes the last two sequential reactions in the de novo biosynthetic pathway for UDP-N-acetylglucosamine (UDP-GlcNAc). The C-terminal domain catalyzes the transfer of acetyl group from acetyl coenzyme A to glucosamine-1-phosphate (GlcN-1-P) to produce N-acetylglucosamine-1-phosphate (GlcNAc-1-P), which is converted into UDP-GlcNAc by the transfer of uridine 5-monophosphate (from uridine 5-triphosphate), a reaction catalyzed by the N-terminal domain. In Dechloromonas aromatica (strain RCB), this protein is Bifunctional protein GlmU.